The following is a 111-amino-acid chain: Phosphoribosyl-ATP pyrophosphatase (111 aa).

This sequence belongs to the PRA-PH family.

It is found in the cytoplasm. The catalysed reaction is 1-(5-phospho-beta-D-ribosyl)-ATP + H2O = 1-(5-phospho-beta-D-ribosyl)-5'-AMP + diphosphate + H(+). It participates in amino-acid biosynthesis; L-histidine biosynthesis; L-histidine from 5-phospho-alpha-D-ribose 1-diphosphate: step 2/9. The chain is Phosphoribosyl-ATP pyrophosphatase (hisE) from Azospirillum brasilense.